The sequence spans 126 residues: MPEPAKSAPAPKKGSKKAVTKAQKKDGRKRKRSRKESYSVYVYKVLKQVHPDTGISSKAMGIMNSFVNDIFERIAGEASRLPHYNKRSTITSREIQTAVRLLLPGELAKHAVSEGTKAVTKYTSAK.

Over residues 1-12 the composition is skewed to low complexity; that stretch reads MPEPAKSAPAPK. Residues 1 to 36 are disordered; the sequence is MPEPAKSAPAPKKGSKKAVTKAQKKDGRKRKRSRKE. Residue Pro2 is modified to N-acetylproline. Position 3 is an ADP-ribosyl glutamic acid (Glu3). Residue Lys6 is modified to N6-(2-hydroxyisobutyryl)lysine; alternate. Position 6 is an N6-(beta-hydroxybutyryl)lysine; alternate (Lys6). Lys6 is modified (N6-acetyllysine; alternate). Lys6 bears the N6-butyryllysine; alternate mark. Lys6 carries the post-translational modification N6-crotonyllysine; alternate. Lys6 is modified (N6-lactoyllysine; alternate). Residue Lys6 forms a Glycyl lysine isopeptide (Lys-Gly) (interchain with G-Cter in SUMO2); alternate linkage. An ADP-ribosylserine modification is found at Ser7. Position 12 is an N6-(beta-hydroxybutyryl)lysine; alternate (Lys12). N6-acetyllysine; alternate occurs at positions 12 and 13. N6-crotonyllysine; alternate occurs at positions 12 and 13. N6-lactoyllysine; alternate is present on Lys12. The residue at position 13 (Lys13) is an N6-(2-hydroxyisobutyryl)lysine; alternate. Ser15 is subject to Phosphoserine; by STK4/MST1. 4 positions are modified to N6-acetyllysine; alternate: Lys16, Lys17, Lys21, and Lys24. Residues Lys16, Lys17, Lys21, and Lys24 each carry the N6-crotonyllysine; alternate modification. N6-lactoyllysine; alternate is present on residues Lys16, Lys17, Lys21, and Lys24. Lys17 and Lys21 each carry N6-(beta-hydroxybutyryl)lysine; alternate. An N6-glutaryllysine; alternate modification is found at Lys17. N6-(2-hydroxyisobutyryl)lysine; alternate is present on residues Lys21 and Lys24. Residue Lys21 is modified to N6-butyryllysine; alternate. Lys21 participates in a covalent cross-link: Glycyl lysine isopeptide (Lys-Gly) (interchain with G-Cter in SUMO2); alternate. Lys25 carries the N6-(2-hydroxyisobutyryl)lysine modification. An N6-(2-hydroxyisobutyryl)lysine; alternate modification is found at Lys35. Lys35 carries the N6-(beta-hydroxybutyryl)lysine; alternate modification. Position 35 is an N6-crotonyllysine; alternate (Lys35). Lys35 carries the N6-glutaryllysine; alternate modification. Lys35 is subject to N6-succinyllysine; alternate. Lys35 is covalently cross-linked (Glycyl lysine isopeptide (Lys-Gly) (interchain with G-Cter in ubiquitin); alternate). PolyADP-ribosyl glutamic acid is present on Glu36. A Phosphoserine; by AMPK modification is found at Ser37. N6-(2-hydroxyisobutyryl)lysine; alternate occurs at positions 44, 47, and 58. Lys44 carries the N6-lactoyllysine; alternate modification. An N6-glutaryllysine; alternate mark is found at Lys44 and Lys47. Lys47 is modified (N6-methyllysine; alternate). Lys58 carries the N6,N6-dimethyllysine; alternate modification. Arg80 bears the Dimethylated arginine mark. N6-(2-hydroxyisobutyryl)lysine; alternate is present on Lys86. The residue at position 86 (Lys86) is an N6-(beta-hydroxybutyryl)lysine; alternate. At Lys86 the chain carries N6-acetyllysine; alternate. Lys86 is modified (N6-lactoyllysine; alternate). Lys86 is modified (N6,N6,N6-trimethyllysine; alternate). Residues Arg87 and Arg93 each carry the omega-N-methylarginine modification. N6-(2-hydroxyisobutyryl)lysine; alternate is present on Lys109. An N6-lactoyllysine; alternate modification is found at Lys109. Lys109 is subject to N6-glutaryllysine; alternate. At Lys109 the chain carries N6-methyllysine; alternate. O-linked (GlcNAc) serine glycosylation occurs at Ser113. Phosphothreonine is present on Thr116. N6-(2-hydroxyisobutyryl)lysine; alternate occurs at positions 117 and 121. Lys117 and Lys121 each carry N6-(beta-hydroxybutyryl)lysine; alternate. An N6-lactoyllysine; alternate mark is found at Lys117 and Lys121. N6-glutaryllysine; alternate occurs at positions 117 and 121. An N6-succinyllysine; alternate mark is found at Lys117 and Lys121. The residue at position 117 (Lys117) is an N6-malonyllysine; alternate. Lys117 bears the N6-methylated lysine; alternate mark. Residue Lys121 forms a Glycyl lysine isopeptide (Lys-Gly) (interchain with G-Cter in ubiquitin); alternate linkage.

The protein belongs to the histone H2B family. As to quaternary structure, the nucleosome is a histone octamer containing two molecules each of H2A, H2B, H3 and H4 assembled in one H3-H4 heterotetramer and two H2A-H2B heterodimers. The octamer wraps approximately 147 bp of DNA. In terms of processing, monoubiquitination at Lys-35 (H2BK34Ub) by the MSL1/MSL2 dimer is required for histone H3 'Lys-4' (H3K4me) and 'Lys-79' (H3K79me) methylation and transcription activation at specific gene loci, such as HOXA9 and MEIS1 loci. Similarly, monoubiquitination at Lys-121 (H2BK120Ub) by the RNF20/40 complex gives a specific tag for epigenetic transcriptional activation and is also prerequisite for histone H3 'Lys-4' and 'Lys-79' methylation. It also functions cooperatively with the FACT dimer to stimulate elongation by RNA polymerase II. H2BK120Ub also acts as a regulator of mRNA splicing: deubiquitination by USP49 is required for efficient cotranscriptional splicing of a large set of exons. Phosphorylation at Ser-37 (H2BS36ph) by AMPK in response to stress promotes transcription. Phosphorylated on Ser-15 (H2BS14ph) by STK4/MST1 during apoptosis; which facilitates apoptotic chromatin condensation. Also phosphorylated on Ser-15 in response to DNA double strand breaks (DSBs), and in correlation with somatic hypermutation and immunoglobulin class-switch recombination. Post-translationally, glcNAcylation at Ser-113 promotes monoubiquitination of Lys-121. It fluctuates in response to extracellular glucose, and associates with transcribed genes. In terms of processing, ADP-ribosylated by PARP1 or PARP2 on Ser-7 (H2BS6ADPr) in response to DNA damage. H2BS6ADPr promotes recruitment of CHD1L. Mono-ADP-ribosylated on Glu-3 (H2BE2ADPr) by PARP3 in response to single-strand breaks. Poly ADP-ribosylation on Glu-36 (H2BE35ADPr) by PARP1 regulates adipogenesis: it inhibits phosphorylation at Ser-37 (H2BS36ph), thereby blocking expression of pro-adipogenetic genes. Crotonylation (Kcr) is specifically present in male germ cells and marks testis-specific genes in post-meiotic cells, including X-linked genes that escape sex chromosome inactivation in haploid cells. Crotonylation marks active promoters and enhancers and confers resistance to transcriptional repressors. It is also associated with post-meiotically activated genes on autosomes. Post-translationally, lactylated in macrophages by EP300/P300 by using lactoyl-CoA directly derived from endogenous or exogenous lactate, leading to stimulates gene transcription.

The protein resides in the nucleus. Its subcellular location is the chromosome. Functionally, core component of nucleosome. Nucleosomes wrap and compact DNA into chromatin, limiting DNA accessibility to the cellular machineries which require DNA as a template. Histones thereby play a central role in transcription regulation, DNA repair, DNA replication and chromosomal stability. DNA accessibility is regulated via a complex set of post-translational modifications of histones, also called histone code, and nucleosome remodeling. Has broad antibacterial activity. May contribute to the formation of the functional antimicrobial barrier of the colonic epithelium, and to the bactericidal activity of amniotic fluid. This Homo sapiens (Human) protein is Histone H2B type F-S.